Here is a 662-residue protein sequence, read N- to C-terminus: Polyadenylate-binding protein 4 (662 aa).

The segment at 1 to 23 (MAQVQAPSSHSPPPPAVVNDGAA) is disordered. 4 consecutive RRM domains span residues 46–124 (CSLY…YSSR), 134–211 (GNLF…PFLR), 225–302 (TNVY…KAQK), and 328–405 (LNLY…LAQR). Low complexity-rich tracts occupy residues 480-489 (PMMQPGQQGP) and 506-518 (QQPM…QMMP). Disordered regions lie at residues 480 to 518 (PMMQ…QMMP) and 634 to 662 (NQPS…NDHL). Residues 558 to 635 (SAGQLATSLA…ALDVLRNVNQ (78 aa)) enclose the PABC domain. Polar residues predominate over residues 634 to 649 (NQPSSQGSEGNKSGSP).

It belongs to the polyadenylate-binding protein type-1 family. Interacts with ERD15/CID1. Interacts with Turnip mosaic virus (TuMV) VPg-Pro.

It is found in the cytoplasm. Its subcellular location is the nucleus. Its function is as follows. Binds the poly(A) tail of mRNA. Appears to be an important mediator of the multiple roles of the poly(A) tail in mRNA biogenesis, stability and translation. During infection with potyvirus TuMV, acts as a potential integral component of the viral replicase complex that could play an important role in the regulation of potyviral RNA-dependent RNA polymerase (RdRp). The polypeptide is Polyadenylate-binding protein 4 (PAB4) (Arabidopsis thaliana (Mouse-ear cress)).